A 1372-amino-acid polypeptide reads, in one-letter code: DNA-directed RNA polymerase subunit beta' (1372 aa).

The Zn(2+) site is built by Cys69, Cys71, Cys84, and Cys87. 3 residues coordinate Mg(2+): Asp460, Asp462, and Asp464. The Zn(2+) site is built by Cys808, Cys882, Cys889, and Cys892.

It belongs to the RNA polymerase beta' chain family. The RNAP catalytic core consists of 2 alpha, 1 beta, 1 beta' and 1 omega subunit. When a sigma factor is associated with the core the holoenzyme is formed, which can initiate transcription. Mg(2+) serves as cofactor. It depends on Zn(2+) as a cofactor.

The catalysed reaction is RNA(n) + a ribonucleoside 5'-triphosphate = RNA(n+1) + diphosphate. Its function is as follows. DNA-dependent RNA polymerase catalyzes the transcription of DNA into RNA using the four ribonucleoside triphosphates as substrates. The chain is DNA-directed RNA polymerase subunit beta' from Rickettsia felis (strain ATCC VR-1525 / URRWXCal2) (Rickettsia azadi).